Here is an 865-residue protein sequence, read N- to C-terminus: Alanine--tRNA ligase (865 aa).

The Zn(2+) site is built by H554, H558, C656, and H660.

The protein belongs to the class-II aminoacyl-tRNA synthetase family. Zn(2+) is required as a cofactor.

Its subcellular location is the cytoplasm. It catalyses the reaction tRNA(Ala) + L-alanine + ATP = L-alanyl-tRNA(Ala) + AMP + diphosphate. Its function is as follows. Catalyzes the attachment of alanine to tRNA(Ala) in a two-step reaction: alanine is first activated by ATP to form Ala-AMP and then transferred to the acceptor end of tRNA(Ala). Also edits incorrectly charged Ser-tRNA(Ala) and Gly-tRNA(Ala) via its editing domain. The chain is Alanine--tRNA ligase from Francisella tularensis subsp. tularensis (strain WY96-3418).